Reading from the N-terminus, the 100-residue chain is uncharacterized protein (100 aa).

This is an uncharacterized protein from Mycoplasma pneumoniae (strain ATCC 29342 / M129 / Subtype 1) (Mycoplasmoides pneumoniae).